A 1106-amino-acid chain; its full sequence is Protein translocase subunit SecA (1106 aa).

ATP-binding positions include glutamine 175, 193 to 197, and aspartate 694; that span reads GEGKT. Residues 1021–1106 are disordered; sequence QEAPADEQQP…KYKNCHGQNA (86 aa). Residues 1042 to 1056 show a composition bias toward basic and acidic residues; the sequence is QRQDMSKYREQKQDL. Residues 1057–1067 show a composition bias toward polar residues; it reads SDPNQQAAASQ. Positions 1068-1085 are enriched in basic and acidic residues; sequence DTREQQKREPIRAEKTVG. The Zn(2+) site is built by cysteine 1090, cysteine 1092, cysteine 1101, and histidine 1102.

Belongs to the SecA family. As to quaternary structure, monomer and homodimer. Part of the essential Sec protein translocation apparatus which comprises SecA, SecYEG and auxiliary proteins SecDF. Other proteins may also be involved. It depends on Zn(2+) as a cofactor.

The protein resides in the cell inner membrane. The protein localises to the cytoplasm. The catalysed reaction is ATP + H2O + cellular proteinSide 1 = ADP + phosphate + cellular proteinSide 2.. In terms of biological role, part of the Sec protein translocase complex. Interacts with the SecYEG preprotein conducting channel. Has a central role in coupling the hydrolysis of ATP to the transfer of proteins into and across the cell membrane, serving as an ATP-driven molecular motor driving the stepwise translocation of polypeptide chains across the membrane. The polypeptide is Protein translocase subunit SecA (Bacteroides thetaiotaomicron (strain ATCC 29148 / DSM 2079 / JCM 5827 / CCUG 10774 / NCTC 10582 / VPI-5482 / E50)).